Consider the following 693-residue polypeptide: Transcription activator of gluconeogenesis BC1G_14637 (693 aa).

A compositionally biased stretch (acidic residues) spans 1–12 (MSGETEIDDPEV). Residues 1–75 (MSGETEIDDP…KFDPKDPLRP (75 aa)) form a disordered region. Residues 21–49 (YSDHEQELDVIGKEGDNQEMAEQKVRPDG) are compositionally biased toward basic and acidic residues. A compositionally biased stretch (polar residues) spans 52-62 (NGNTVGATATV). Residues 65–74 (PKFDPKDPLR) show a composition bias toward basic and acidic residues. Residues 84-112 (CFACQRAHLTCGDERPCQRCIKRGLADAC) constitute a DNA-binding region (zn(2)-C6 fungal-type). Polar residues-rich tracts occupy residues 144–155 (SSNRATAASTPT) and 275–287 (SAETPPQDSSAGM). Disordered regions lie at residues 144–170 (SSNRATAASTPTEPSPGMGNFFSQPDT), 273–299 (SGSAETPPQDSSAGMPQNVGDLGFSNN), 350–413 (TSGS…RNRD), and 531–567 (NLNTNTGSGGPPSSGSSGRGSFTTPRMRPVNLADSNP). The span at 356 to 367 (SPSTDASPAAST) shows a compositional bias: low complexity. The span at 369–379 (GFESSPTTTNY) shows a compositional bias: polar residues. Positions 394 to 408 (KSGPSGKLGPSGILG) are enriched in low complexity.

Belongs to the ERT1/acuK family.

The protein localises to the nucleus. In terms of biological role, transcription factor which regulates nonfermentable carbon utilization. Activator of gluconeogenetic genes. The polypeptide is Transcription activator of gluconeogenesis BC1G_14637 (Botryotinia fuckeliana (strain B05.10) (Noble rot fungus)).